Here is a 301-residue protein sequence, read N- to C-terminus: MNQPIRQLALIGPTASGKTALAIKAAQALDAHILSIDSLSIYKEIDIVSAKPTKEEQKGIKHFGIDFIAPNEDFDVTTFIRLYEDVHVRAVADNKNLVIVGGTSFYLKMLMEGISKLPKISETTKRRTTEALRDLQKSHEWLSTLDPDYMQKISSSDPYRIEKALDIYFETGTCPTEYFKAFPPKPTIQSELPIYQIETDRELLRKRISLRTQMMLEDGLIDEICMLEEKYTRAPNCMKAIGIKETLAYLDGIYEREMLKEKITVNTARLAKRQTTFNHSQFDNVIKGSVSELEKILLQGA.

An ATP-binding site is contributed by 12–19; the sequence is GPTASGKT. 14 to 19 is a substrate binding site; sequence TASGKT. An interaction with substrate tRNA region spans residues 37–40; sequence DSLS.

It belongs to the IPP transferase family. Monomer. Mg(2+) is required as a cofactor.

It carries out the reaction adenosine(37) in tRNA + dimethylallyl diphosphate = N(6)-dimethylallyladenosine(37) in tRNA + diphosphate. Its function is as follows. Catalyzes the transfer of a dimethylallyl group onto the adenine at position 37 in tRNAs that read codons beginning with uridine, leading to the formation of N6-(dimethylallyl)adenosine (i(6)A). In Sulfurovum sp. (strain NBC37-1), this protein is tRNA dimethylallyltransferase.